The following is a 400-amino-acid chain: uncharacterized protein (400 aa).

The first 31 residues, 1–31 (MENPIKPVATRSIGIAVVLLVVGIVIGFAVG), serve as a signal peptide directing secretion.

The protein belongs to the bacterial solute-binding protein 1 family. WtpA subfamily.

This is an uncharacterized protein from Thermoplasma acidophilum (strain ATCC 25905 / DSM 1728 / JCM 9062 / NBRC 15155 / AMRC-C165).